The sequence spans 702 residues: MEDPFEEADQPATEPGMVMDSVEAGDTTPPTKRKSKFSGVGKIFKPWKWRKKKSSDKFKETSEVLERKISMRKPREELVKRGVLLEDPEQGGEDPGKPSHAMLKNGHTTPIGNARSSSPVQVEEEPVRLASLRKAIPEEDLKKRLGSTGSQPNSEAESVPENVPKPPLLPPKRPLSSSHEASEGQAKDATSSGGTARFIISTSITTAPAATTAATSLAKTVNLSVTPSPAPRTLPAAPASTNTTATPSLTHMVPAKQPPIPPPKPAHRNSNPVIAELSQAINSGTLLSKPSPPLPPKRGIPSTSVPTLESAAAITTKTPSDEREKSTCSMGSELLPMISPRSPSPPLPTHIPPEPPRTPPFPAKTFQVVPEIQFPPSLDLHQEIPQQEDQKKEVPKRILDQNFGEPHIPSRLPPLPLHIRIQQALTSPLPVTPTLEGSHRAHSLLFENSDSFSEDSSTLGRTRSLPITIEMLKVPDDEEEEEQICPSTFSEETTPTSVIPKLPQCLREEEEKESDSDSEGPIQYRDEEDEDESYQSALANKVKRKDTLAMKLNHRPSEPELNLNSWPCKSKEEWNEIRHQIGNTLIRRLSQRPTPEELEQRNILQPKNEADRQAEKREIKRRLTRKLSQRPTVAELLARKILRFNEYVEVTDAQDYDRRADKPWTKLTPADKAAIRKELNEFKSSEMEVHEESKHFTRYHRP.

3 disordered regions span residues 1 to 38 (MEDP…SKFS), 82 to 194 (GVLL…SSGG), and 222 to 363 (NLSV…PFPA). One copy of the RPEL 1 repeat lies at 63 to 88 (EVLERKISMRKPREELVKRGVLLEDP). Residues 106–120 (GHTTPIGNARSSSPV) show a composition bias toward polar residues. A phosphoserine mark is found at serine 116, serine 118, serine 131, and serine 147. Polar residues predominate over residues 147 to 156 (STGSQPNSEA). The segment covering 163 to 173 (VPKPPLLPPKR) has biased composition (pro residues). Over residues 233-250 (TLPAAPASTNTTATPSLT) the composition is skewed to low complexity. 2 positions are modified to phosphoserine: serine 270 and serine 291. A compositionally biased stretch (polar residues) spans 301 to 318 (PSTSVPTLESAAAITTKT). Serine 342 and serine 344 each carry phosphoserine. A compositionally biased stretch (pro residues) spans 342–362 (SPSPPLPTHIPPEPPRTPPFP). Phosphothreonine is present on threonine 358. At serine 427 the chain carries Phosphoserine. The residue at position 432 (threonine 432) is a Phosphothreonine. Residues serine 443, serine 453, and serine 464 each carry the phosphoserine modification. Residues 473–536 (KVPDDEEEEE…EEDEDESYQS (64 aa)) form a disordered region. Over residues 486-497 (PSTFSEETTPTS) the composition is skewed to low complexity. The segment covering 508–518 (EEEEKESDSDS) has biased composition (acidic residues). 4 positions are modified to phosphoserine: serine 514, serine 516, serine 557, and serine 590. RPEL repeat units lie at residues 583–608 (NTLI…QPKN) and 621–646 (RRLT…RFNE). Residues 592–615 (RPTPEELEQRNILQPKNEADRQAE) form a disordered region. Serine 628 carries the post-translational modification Phosphoserine.

This sequence belongs to the phosphatase and actin regulator family. As to quaternary structure, binds PPP1CA and actin.

Its subcellular location is the cytoplasm. It localises to the cell projection. It is found in the lamellipodium. Its function is as follows. Regulator of protein phosphatase 1 (PP1) required for neural tube and optic fissure closure, and enteric neural crest cell (ENCCs) migration during development. Acts as an activator of PP1 by interacting with PPP1CA and preventing phosphorylation of PPP1CA at 'Thr-320'. During neural tube closure, localizes to the ventral neural tube and activates PP1, leading to down-regulate cell proliferation within cranial neural tissue and the neural retina. Also acts as a regulator of migration of enteric neural crest cells (ENCCs) by activating PP1, leading to dephosphorylation and subsequent activation of cofilin (COF1 or COF2) and repression of the integrin signaling through the RHO/ROCK pathway. The chain is Phosphatase and actin regulator 4 (PHACTR4) from Pongo abelii (Sumatran orangutan).